Consider the following 227-residue polypeptide: Exodeoxyribonuclease (227 aa).

It carries out the reaction Exonucleolytic cleavage in the 3'- to 5'-direction to yield nucleoside 5'-phosphates.. Its function is as follows. 3'-5' exonuclease that preferentially uses ssDNA as substrate. Plays a role in group I intron homing. May play a role in the final step of host DNA degradation, by scavenging DNA into mononucleotides. In Escherichia coli (Bacteriophage T4), this protein is Exodeoxyribonuclease (dexA).